The sequence spans 534 residues: Probable protein kinase UbiB (534 aa).

The chain crosses the membrane as a helical span at residues 23-43 (DLLFDLPLPWFLLALRFALPW). The 368-residue stretch at 125–492 (RFDIEPLASA…WHKRKDDWFL (368 aa)) folds into the Protein kinase domain. ATP-binding positions include 131-139 (LASASVAQV) and Lys-153. The active-site Proton acceptor is the Asp-288. Transmembrane regions (helical) follow at residues 490–510 (WFLR…AAGG) and 512–532 (LHEL…YLIV).

This sequence belongs to the ABC1 family. UbiB subfamily.

The protein localises to the cell inner membrane. It participates in cofactor biosynthesis; ubiquinone biosynthesis [regulation]. Its function is as follows. Is probably a protein kinase regulator of UbiI activity which is involved in aerobic coenzyme Q (ubiquinone) biosynthesis. The protein is Probable protein kinase UbiB of Pseudomonas fluorescens (strain ATCC BAA-477 / NRRL B-23932 / Pf-5).